The following is a 113-amino-acid chain: MHEMSIAMSVVEAVVDKAREEGGGKITGIDLVVGRLAGVEVESLKFCFGAAARGTLAEGAELVIEEPEGRGRCEACGAEFPVTSFYAKCSACGQFRVKIESGRELAVRSFTIE.

H2 lines the Ni(2+) pocket. Zn(2+)-binding residues include C73, C76, C89, and C92.

It belongs to the HypA/HybF family.

Functionally, involved in the maturation of [NiFe] hydrogenases. Required for nickel insertion into the metal center of the hydrogenase. The sequence is that of Hydrogenase maturation factor HypA from Chlorobaculum tepidum (strain ATCC 49652 / DSM 12025 / NBRC 103806 / TLS) (Chlorobium tepidum).